The primary structure comprises 128 residues: uncharacterized protein (128 aa).

The VOC domain maps to 1–126; that stretch reads MHHIELYVSD…DRIKVELVAP (126 aa).

This is an uncharacterized protein from Bacillus subtilis (strain 168).